The chain runs to 344 residues: L-rhamnose-proton symporter (344 aa).

10 helical membrane-spanning segments follow: residues 4-24, 38-58, 68-88, 101-121, 137-157, 175-195, 214-234, 259-279, 290-310, and 323-343; these read AITM…CFYA, WSVG…ALLL, FSLS…IGNI, MGIG…TPII, TLLG…AGQL, LVLA…MNAA, LPSY…FCFI, VLLS…YAWG, ISWM…GLVL, and VLSL…IGMA.

The protein belongs to the L-rhamnose transporter (TC 2.A.7.6) family.

It localises to the cell inner membrane. The enzyme catalyses L-rhamnopyranose(in) + H(+)(in) = L-rhamnopyranose(out) + H(+)(out). Uptake of L-rhamnose across the cytoplasmic membrane with the concomitant transport of protons into the cell (symport system). The chain is L-rhamnose-proton symporter from Escherichia coli (strain ATCC 8739 / DSM 1576 / NBRC 3972 / NCIMB 8545 / WDCM 00012 / Crooks).